The sequence spans 977 residues: Receptor-like protein kinase 7 (977 aa).

An N-terminal signal peptide occupies residues 1 to 28; it reads MAPSLRNFNFFHRFSTFLVFSLFSVVSS. At 29-608 the chain is on the extracellular side; it reads DDLQVLLKLK…NPSRSHGDTR (580 aa). LRR repeat units follow at residues 71 to 95, 96 to 119, and 121 to 145; these read RGNVTEIDLSRRGLSGNFPFDSVCE, IQSLEKLSLGFNSLSGIIPSDLKN, and TSLKYLDLGNNLFSGAFPEFSSLNQ. N-linked (GlcNAc...) asparagine glycans are attached at residues asparagine 73 and asparagine 119. N-linked (GlcNAc...) asparagine glycosylation is found at asparagine 152 and asparagine 167. 17 LRR repeats span residues 168–194, 195–218, 219–242, 244–265, 267–289, 290–312, 313–337, 339–361, 362–385, 386–409, 411–433, 434–457, 458–481, 482–505, 507–529, 530–553, and 555–578; these read ATSLVVLSLGDNPFDATADFPVEVVSL, KKLSWLYLSNCSIAGKIPPAIGDL, TELRNLEISDSGLTGEIPSEISKL, NLWQLELYNNSLTGKLPTGFGN, KNLTYLDASTNLLQGDLSELRSL, TNLVSLQMFENEFSGEIPLEFGE, FKDLVNLSLYTNKLTGSLPQGLGSL, DFDFIDASENLLTGPIPPDMCKN, GKMKALLLLQNNLTGSIPESYANC, LTLQRFRVSENNLNGTVPAGLWGL, KLEIIDIEMNNFEGPITADIKNG, KMLGALYLGFNKLSDELPEEIGDT, ESLTKVELNNNRFTGKIPSSIGKL, KGLSSLKMQSNGFSGEIPDSIGSC, MLSDVNMAQNSISGEIPHTLGSL, PTLNALNLSDNKLSGRIPESLSSL, and LSLLDLSNNRLSGRIPLSLSSYNG. N-linked (GlcNAc...) asparagine glycosylation occurs at asparagine 204. N-linked (GlcNAc...) asparagine glycans are attached at residues asparagine 252 and asparagine 268. N-linked (GlcNAc...) asparagine glycosylation occurs at asparagine 318. N-linked (GlcNAc...) asparagine glycosylation is found at asparagine 373 and asparagine 399. 2 N-linked (GlcNAc...) asparagine glycosylation sites follow: asparagine 536 and asparagine 577. Residues 609–629 traverse the membrane as a helical segment; that stretch reads VFVLCIVFGLLILLASLVFFL. Over 630–977 the chain is Cytoplasmic; it reads YLKKTEKKEG…ESDVKVKEIS (348 aa). Positions 666 to 959 constitute a Protein kinase domain; it reads IKEENLIGRG…QMIEDAEPCR (294 aa). Residues 672–680 and lysine 694 contribute to the ATP site; that span reads IGRGGCGDV. Aspartate 805 acts as the Proton acceptor in catalysis.

Belongs to the protein kinase superfamily. Ser/Thr protein kinase family. In terms of assembly, interacts with PIP1. In terms of tissue distribution, expressed in roots, stems and dry seeds. Expressed at junctions between organs, such as the insertion zones of stamens, petals and sepals, the transition zones of floral stem and pedicel, pedicel and silique, and floral stem and cauline leaves.

The protein localises to the membrane. It catalyses the reaction L-seryl-[protein] + ATP = O-phospho-L-seryl-[protein] + ADP + H(+). The catalysed reaction is L-threonyl-[protein] + ATP = O-phospho-L-threonyl-[protein] + ADP + H(+). Functionally, plays a role in pattern-triggered immunity (PTI) signaling induced by pathogen-associated molecular patterns (PAMPs). Acts as a receptor for PIP1 defense peptide. PIP1 is an endogenous secreted peptide that acts as elicitor of immune response and positive regulator of defense response. Involved in the control of seed germination speed, in tolerance to oxidative stress and in maintaining seed longevity. The polypeptide is Receptor-like protein kinase 7 (Arabidopsis thaliana (Mouse-ear cress)).